A 228-amino-acid chain; its full sequence is UPF0758 protein CKR_0778 (228 aa).

One can recognise an MPN domain in the interval 106-228; sequence RICSPQDAAV…FISLKEKGIL (123 aa). Positions 177, 179, and 190 each coordinate Zn(2+). A JAMM motif motif is present at residues 177-190; the sequence is HNHPSGDPSPSNED.

Belongs to the UPF0758 family.

The chain is UPF0758 protein CKR_0778 from Clostridium kluyveri (strain NBRC 12016).